The sequence spans 239 residues: Apoptosis regulator Bcl-2 (239 aa).

The BH4 motif lies at 10-30 (DNREIVMKYIHYKLSQRGYEW). The interval 39 to 85 (PPGAAPAPGIFSSQPGHTPHPAASRDPVARTSPLQTPAAPGAAAGPA) is disordered. T69 carries the phosphothreonine; by MAPK8 modification. At S70 the chain carries Phosphoserine; by MAPK8 and PKC. Positions 75-85 (PAAPGAAAGPA) are enriched in low complexity. The residue at position 87 (S87) is a Phosphoserine; by MAPK8. The required for interaction with SEPTIN4 isoform ARTS. Required XIAP-mediated ubiquitination and apoptosis stretch occupies residues 92-107 (VVHLTLRQAGDDFSRR). The BH3 signature appears at 93–107 (VHLTLRQAGDDFSRR). A BH1 motif is present at residues 136-155 (ELFRDGVNWGRIVAFFEFGG). A BH2 motif is present at residues 187 to 202 (TWIQDNGGWDAFVELY). A helical transmembrane segment spans residues 212–233 (FSWLSLKTLLSLALVGACITLG).

Belongs to the Bcl-2 family. Forms homodimers, and heterodimers with BAX, BAD, BAK and Bcl-X(L). Heterodimerization with BAX requires intact BH1 and BH2 motifs, and is necessary for anti-apoptotic activity. Part of a complex composed of SEPTIN4 isoform ARTS, XIAP and BCL2, within the complex interacts (via BH3 domain) with SEPTIN4 isoform ARTS and XIAP, SEPTIN4 isoform ARTS acts as a scaffold protein and stabilizes the complex. Component of the complex, at least composed of LRPPRC, BECN1 and BCL2; the interactions prevent BECN1 from forming an autophagy-inducing complex with PIK3C3. Interacts with EI24. Also interacts with APAF1, BBC3, BCL2L1, BNIPL, MRPL41 and TP53BP2. Binding to FKBP8 seems to target BCL2 to the mitochondria and probably interferes with the binding of BCL2 to its targets. Interacts with BAG1 in an ATP-dependent manner. Interacts with RAF1 (the 'Ser-338' and 'Ser-339' phosphorylated form). Interacts (via the BH4 domain) with EGLN3; the interaction prevents the formation of the BAX-BCL2 complex and inhibits the anti-apoptotic activity of BCL2. Interacts with G0S2; this interaction also prevents the formation of the anti-apoptotic BAX-BCL2 complex. Interacts with RTL10/BOP. Interacts with the SCF(FBXO10) complex. Interacts (via the loop between motifs BH4 and BH3) with NLRP1 (via LRR repeats), but not with NLRP2, NLRP3, NLRP4, PYCARD, nor MEFV. Interacts with GIMAP3/IAN4, GIMAP4/IAN1 and GIMAP5/IAN5. Interacts with BCAP31. Interacts with IRF3; the interaction is inhibited by Sendai virus infection. Interacts with BECN1; thereby inhibiting autophagy in non-starvation conditions. Interacts with AMBRA1; thereby inhibiting autophagy. In terms of assembly, (Microbial infection) Interacts with Toxoplasma gondii ROP17; the interaction probably promotes BCL2 phosphorylation and degradation. Post-translationally, phosphorylation/dephosphorylation on Ser-70 regulates anti-apoptotic activity. Growth factor-stimulated phosphorylation on Ser-70 by PKC is required for the anti-apoptosis activity and occurs during the G2/M phase of the cell cycle. In the absence of growth factors, BCL2 appears to be phosphorylated by other protein kinases such as ERKs and stress-activated kinases. Phosphorylated by MAPK8/JNK1 at Thr-69, Ser-70 and Ser-87, which stimulates starvation-induced autophagy. Dephosphorylated by protein phosphatase 2A (PP2A). Proteolytically cleaved by caspases during apoptosis. The cleaved protein, lacking the BH4 motif, has pro-apoptotic activity, causes the release of cytochrome c into the cytosol promoting further caspase activity. In terms of processing, monoubiquitinated by PRKN, leading to an increase in its stability. Ubiquitinated by SCF(FBXO10), leading to its degradation by the proteasome. Ubiquitinated by XIAP, leading to its degradation by the proteasome. In terms of tissue distribution, expressed in a variety of tissues.

It is found in the mitochondrion outer membrane. It localises to the nucleus membrane. The protein resides in the endoplasmic reticulum membrane. Its subcellular location is the cytoplasm. Functionally, suppresses apoptosis in a variety of cell systems including factor-dependent lymphohematopoietic and neural cells. Regulates cell death by controlling the mitochondrial membrane permeability. Appears to function in a feedback loop system with caspases. Inhibits caspase activity either by preventing the release of cytochrome c from the mitochondria and/or by binding to the apoptosis-activating factor (APAF-1). Also acts as an inhibitor of autophagy: interacts with BECN1 and AMBRA1 during non-starvation conditions and inhibits their autophagy function. May attenuate inflammation by impairing NLRP1-inflammasome activation, hence CASP1 activation and IL1B release. In Homo sapiens (Human), this protein is Apoptosis regulator Bcl-2 (BCL2).